An 80-amino-acid chain; its full sequence is Ataxin-8 (80 aa).

As to expression, specifically found in brains from SCA8 patients (at protein level).

It is found in the nucleus. The protein is Ataxin-8 (ATXN8) of Homo sapiens (Human).